A 370-amino-acid polypeptide reads, in one-letter code: Protein STRICTOSIDINE SYNTHASE-LIKE 9 (370 aa).

The N-terminal stretch at 1–26 (MPINQKIPTWFAVPAVFAVLSVISYQ) is a signal peptide. N-linked (GlcNAc...) asparagine glycans are attached at residues Asn-97 and Asn-171.

Belongs to the strictosidine synthase family.

The protein resides in the vacuole. The protein is Protein STRICTOSIDINE SYNTHASE-LIKE 9 of Arabidopsis thaliana (Mouse-ear cress).